A 258-amino-acid polypeptide reads, in one-letter code: Ditrans,polycis-undecaprenyl-diphosphate synthase ((2E,6E)-farnesyl-diphosphate specific) (258 aa).

Asp24 is a catalytic residue. Asp24 provides a ligand contact to Mg(2+). Substrate contacts are provided by residues 25–28 (GNGR), Trp29, Arg37, His41, and 69–71 (SSE). Asn72 serves as the catalytic Proton acceptor. Substrate is bound by residues Trp73, Arg75, Arg192, and 198-200 (RIS). Glu211 provides a ligand contact to Mg(2+).

Belongs to the UPP synthase family. As to quaternary structure, homodimer. The cofactor is Mg(2+).

The catalysed reaction is 8 isopentenyl diphosphate + (2E,6E)-farnesyl diphosphate = di-trans,octa-cis-undecaprenyl diphosphate + 8 diphosphate. Its function is as follows. Catalyzes the sequential condensation of isopentenyl diphosphate (IPP) with (2E,6E)-farnesyl diphosphate (E,E-FPP) to yield (2Z,6Z,10Z,14Z,18Z,22Z,26Z,30Z,34E,38E)-undecaprenyl diphosphate (di-trans,octa-cis-UPP). UPP is the precursor of glycosyl carrier lipid in the biosynthesis of bacterial cell wall polysaccharide components such as peptidoglycan and lipopolysaccharide. This is Ditrans,polycis-undecaprenyl-diphosphate synthase ((2E,6E)-farnesyl-diphosphate specific) from Xanthomonas oryzae pv. oryzae (strain KACC10331 / KXO85).